The following is a 336-amino-acid chain: Vacuolar protein sorting-associated protein 26B (336 aa).

Phosphoserine is present on residues serine 302, serine 304, and serine 319.

It belongs to the VPS26 family. Component of the heterotrimeric retromer cargo-selective complex (CSC), also described as vacuolar protein sorting subcomplex (VPS), formed by VPS26 (VPS26A or VPS26B), VPS29 and VPS35. The CSC has a highly elongated structure with VPS26 and VPS29 binding independently at opposite distal ends of VPS35 as central platform. The CSC is believed to associate with variable sorting nexins to form functionally distinct retromer complex variants. The originally described SNX-BAR retromer is a pentamer containing the CSC and a heterodimeric membrane-deforming subcomplex formed between SNX1 or SNX2 and SNX5 or SNX6 (also called SNX-BAR subcomplex); the respective CSC and SNX-BAR subcomplexes associate with low affinity. The CSC associates with SNX3 to form a SNX3-retromer complex. The CSC associates with SNX27, the WASH complex and the SNX-BAR subcomplex to form the SNX27-retromer complex. Interacts with VPS29, VPS35, TBC1D5, GOLPH3, SNX27. As to expression, ubiquitously expressed in developing embryo and adult. Highly expressed in brain.

The protein localises to the cytoplasm. The protein resides in the membrane. It is found in the early endosome. It localises to the late endosome. Its function is as follows. Acts as a component of the retromer cargo-selective complex (CSC). The CSC is believed to be the core functional component of retromer or respective retromer complex variants acting to prevent missorting of selected transmembrane cargo proteins into the lysosomal degradation pathway. The recruitment of the CSC to the endosomal membrane involves RAB7A and SNX3. The SNX-BAR retromer mediates retrograde transport of cargo proteins from endosomes to the trans-Golgi network (TGN) and is involved in endosome-to-plasma membrane transport for cargo protein recycling. The SNX3-retromer mediates the retrograde transport of WLS distinct from the SNX-BAR retromer pathway. The SNX27-retromer is believed to be involved in endosome-to-plasma membrane trafficking and recycling of a broad spectrum of cargo proteins. The CSC seems to act as recruitment hub for other proteins, such as the WASH complex and TBC1D5. May be involved in retrograde transport of SORT1 but not of IGF2R. Acts redundantly with VSP26A in SNX-27 mediated endocytic recycling of SLC2A1/GLUT1. The chain is Vacuolar protein sorting-associated protein 26B (Vps26b) from Mus musculus (Mouse).